The primary structure comprises 419 residues: Gamma-glutamyl phosphate reductase (419 aa).

The protein belongs to the gamma-glutamyl phosphate reductase family.

The protein localises to the cytoplasm. The catalysed reaction is L-glutamate 5-semialdehyde + phosphate + NADP(+) = L-glutamyl 5-phosphate + NADPH + H(+). The protein operates within amino-acid biosynthesis; L-proline biosynthesis; L-glutamate 5-semialdehyde from L-glutamate: step 2/2. Its function is as follows. Catalyzes the NADPH-dependent reduction of L-glutamate 5-phosphate into L-glutamate 5-semialdehyde and phosphate. The product spontaneously undergoes cyclization to form 1-pyrroline-5-carboxylate. This is Gamma-glutamyl phosphate reductase from Oleidesulfovibrio alaskensis (strain ATCC BAA-1058 / DSM 17464 / G20) (Desulfovibrio alaskensis).